The following is a 155-amino-acid chain: Small ribosomal subunit protein uS7 (155 aa).

This sequence belongs to the universal ribosomal protein uS7 family. Part of the 30S ribosomal subunit. Contacts proteins S9 and S11.

Functionally, one of the primary rRNA binding proteins, it binds directly to 16S rRNA where it nucleates assembly of the head domain of the 30S subunit. Is located at the subunit interface close to the decoding center, probably blocks exit of the E-site tRNA. In Malacoplasma penetrans (strain HF-2) (Mycoplasma penetrans), this protein is Small ribosomal subunit protein uS7.